Here is a 432-residue protein sequence, read N- to C-terminus: Enolase (432 aa).

A (2R)-2-phosphoglycerate-binding site is contributed by Gln-167. Catalysis depends on Glu-209, which acts as the Proton donor. Asp-246, Glu-290, and Asp-317 together coordinate Mg(2+). 4 residues coordinate (2R)-2-phosphoglycerate: Lys-342, Arg-371, Ser-372, and Lys-393. Residue Lys-342 is the Proton acceptor of the active site.

It belongs to the enolase family. In terms of assembly, component of the RNA degradosome, a multiprotein complex involved in RNA processing and mRNA degradation. The cofactor is Mg(2+).

The protein localises to the cytoplasm. Its subcellular location is the secreted. It localises to the cell surface. It carries out the reaction (2R)-2-phosphoglycerate = phosphoenolpyruvate + H2O. It functions in the pathway carbohydrate degradation; glycolysis; pyruvate from D-glyceraldehyde 3-phosphate: step 4/5. Functionally, catalyzes the reversible conversion of 2-phosphoglycerate (2-PG) into phosphoenolpyruvate (PEP). It is essential for the degradation of carbohydrates via glycolysis. This is Enolase from Klebsiella pneumoniae subsp. pneumoniae (strain ATCC 700721 / MGH 78578).